Reading from the N-terminus, the 609-residue chain is Glutamine--fructose-6-phosphate aminotransferase [isomerizing] (609 aa).

Cysteine 2 functions as the Nucleophile; for GATase activity in the catalytic mechanism. Residues 2–217 (CGIVGAIAGR…DGDTAEIRRD (216 aa)) enclose the Glutamine amidotransferase type-2 domain. SIS domains lie at 285–425 (AESV…LRGA) and 458–599 (WAEC…VDKP). Lysine 604 (for Fru-6P isomerization activity) is an active-site residue.

Homodimer.

It localises to the cytoplasm. It carries out the reaction D-fructose 6-phosphate + L-glutamine = D-glucosamine 6-phosphate + L-glutamate. Its function is as follows. Catalyzes the first step in hexosamine metabolism, converting fructose-6P into glucosamine-6P using glutamine as a nitrogen source. The chain is Glutamine--fructose-6-phosphate aminotransferase [isomerizing] from Xylella fastidiosa (strain 9a5c).